Here is a 376-residue protein sequence, read N- to C-terminus: MTTTLIPAQQYRDIFVAGKPLIDLRAPIEFNRGAFPSSVNLPLMVDKEREKVGTCYKQQGQQAAIALGHSLVHGAVKQQRIDAWLGFLAAQPEAYLYCFRGGLRSQLTQQWLKEAGATVPYVQGGYKGMRQYLIGVIETTPSQQPLLSLSGMTGSGKTDFLIQRKEAVDLEGIANHRGSSFGKNIDPQPTQINFENQLAIALLRHQQDNHSCLLLEDESFLIGRSALPQSFYNAMQAADILVLEEADDIRLNRLLDEYVHKMHQGFVERLGIEAGFNAFSQYLLQSLTSIRKRLGGKQYQELQDTMQQALSQQLNQNQTSQHLAWINLLLQKYYDPMYEYQLEKKAHRVLFRGNHQAMHEWLDNLSQDSLSQENLG.

The region spanning 15–138 is the Rhodanese domain; the sequence is FVAGKPLIDL…MRQYLIGVIE (124 aa). The active-site S-selanylcysteine intermediate is the Cys-98.

Belongs to the SelU family. As to quaternary structure, monomer.

It catalyses the reaction 5-methylaminomethyl-2-thiouridine(34) in tRNA + selenophosphate + (2E)-geranyl diphosphate + H2O + H(+) = 5-methylaminomethyl-2-selenouridine(34) in tRNA + (2E)-thiogeraniol + phosphate + diphosphate. The catalysed reaction is 5-methylaminomethyl-2-thiouridine(34) in tRNA + (2E)-geranyl diphosphate = 5-methylaminomethyl-S-(2E)-geranyl-thiouridine(34) in tRNA + diphosphate. The enzyme catalyses 5-methylaminomethyl-S-(2E)-geranyl-thiouridine(34) in tRNA + selenophosphate + H(+) = 5-methylaminomethyl-2-(Se-phospho)selenouridine(34) in tRNA + (2E)-thiogeraniol. It carries out the reaction 5-methylaminomethyl-2-(Se-phospho)selenouridine(34) in tRNA + H2O = 5-methylaminomethyl-2-selenouridine(34) in tRNA + phosphate. Functionally, involved in the post-transcriptional modification of the uridine at the wobble position (U34) of tRNA(Lys), tRNA(Glu) and tRNA(Gln). Catalyzes the conversion of 2-thiouridine (S2U-RNA) to 2-selenouridine (Se2U-RNA). Acts in a two-step process involving geranylation of 2-thiouridine (S2U) to S-geranyl-2-thiouridine (geS2U) and subsequent selenation of the latter derivative to 2-selenouridine (Se2U) in the tRNA chain. The protein is tRNA 2-selenouridine synthase of Shewanella oneidensis (strain ATCC 700550 / JCM 31522 / CIP 106686 / LMG 19005 / NCIMB 14063 / MR-1).